Reading from the N-terminus, the 190-residue chain is Glutamyl-tRNA(Gln) amidotransferase subunit C, mitochondrial (190 aa).

Residues 1–96 (MISFQIILQQ…VLNLKQAVRF (96 aa)) constitute a mitochondrion transit peptide. The tract at residues 28–57 (KSNSTAVGSSDEDDEIYVPKKPIPSPIDQS) is disordered.

Belongs to the GatC family. Subunit of the heterotrimeric GatCAB amidotransferase (AdT) complex, composed of A, B and C subunits.

It localises to the mitochondrion. The enzyme catalyses L-glutamyl-tRNA(Gln) + L-glutamine + ATP + H2O = L-glutaminyl-tRNA(Gln) + L-glutamate + ADP + phosphate + H(+). Allows the formation of correctly charged Gln-tRNA(Gln) through the transamidation of misacylated Glu-tRNA(Gln) in the mitochondria. The reaction takes place in the presence of glutamine and ATP through an activated gamma-phospho-Glu-tRNA(Gln). This Loa loa (Eye worm) protein is Glutamyl-tRNA(Gln) amidotransferase subunit C, mitochondrial.